The chain runs to 549 residues: Glucose-6-phosphate isomerase (549 aa).

E353 acts as the Proton donor in catalysis. Residues H384 and K513 contribute to the active site.

This sequence belongs to the GPI family.

It is found in the cytoplasm. It catalyses the reaction alpha-D-glucose 6-phosphate = beta-D-fructose 6-phosphate. Its pathway is carbohydrate biosynthesis; gluconeogenesis. It participates in carbohydrate degradation; glycolysis; D-glyceraldehyde 3-phosphate and glycerone phosphate from D-glucose: step 2/4. Catalyzes the reversible isomerization of glucose-6-phosphate to fructose-6-phosphate. The chain is Glucose-6-phosphate isomerase from Bartonella bacilliformis (strain ATCC 35685 / KC583 / Herrer 020/F12,63).